A 312-amino-acid polypeptide reads, in one-letter code: MSDAFCSDCKRHTEVVFDHSAGDTVCSECGLVLESHSIDETSEWRTFANESGDNDPVRVGGPTNPLLADGGLTTVISKPNGSSGDFLSSSLGRWQNRGSNPDRGLIVAFKTIATMADRLGLVATIKDRANEIYKRVEDQKSSRGRNQDALLAACLYIACRQEDKPRTVKEICSVANGATKKEIGRAKEYIVKQLGLETGQLVEMGTIHAGDFMRRFCSNLGMTNQTVKAAQESVQKSEEFDIRRSPISIAAAVIYIITQLSDEKKPLRDISVATGVAEGTIRNSYKDLYPHLSKIIPAWYAKEEDLKNLQSP.

The segment at 2-34 (SDAFCSDCKRHTEVVFDHSAGDTVCSECGLVLE) adopts a TFIIB-type zinc-finger fold. Residues C6, C9, C26, and C29 each contribute to the Zn(2+) site. A run of 2 repeats spans residues 115-192 (MADR…YIVK) and 216-290 (FCSN…DLYP).

It belongs to the TFIIB family. Associates with TFIID-IIA (DA complex) to form TFIID-IIA-IIB (DAB-complex) which is then recognized by polymerase II.

It is found in the nucleus. General factor that plays a major role in the activation of eukaryotic genes transcribed by RNA polymerase II. The chain is Transcription initiation factor IIB-2 (TFIIB2) from Arabidopsis thaliana (Mouse-ear cress).